The sequence spans 495 residues: Lysine--tRNA ligase (495 aa).

Positions 406 and 413 each coordinate Mg(2+).

It belongs to the class-II aminoacyl-tRNA synthetase family. Homodimer. Requires Mg(2+) as cofactor.

The protein resides in the cytoplasm. The catalysed reaction is tRNA(Lys) + L-lysine + ATP = L-lysyl-tRNA(Lys) + AMP + diphosphate. The polypeptide is Lysine--tRNA ligase (Leptospira borgpetersenii serovar Hardjo-bovis (strain JB197)).